Consider the following 165-residue polypeptide: MPPKFDPNEVKYLYLRAVGGEVGASAALAPKIGPLGLSPKKVGEDIAKATKEFKGIKVTVQLKIQNRQAAASVVPSASSLVITALKEPPRDRKKDKNVKHSGNIQLDEIIEIARQMRDKSFGRTLASVTKEILGTAQSVGCRVDFKNPHDIIEGINAGEIEIPEN.

Proline 2 carries the n,N-dimethylproline; by NTM1 modification. N6,N6,N6-trimethyllysine; by RKM2 is present on residues lysine 4 and lysine 11. A phosphoserine mark is found at serine 25 and serine 38. An N5-methylarginine; by RMT2 modification is found at arginine 67. Glycyl lysine isopeptide (Lys-Gly) (interchain with G-Cter in ubiquitin) cross-links involve residues lysine 130 and lysine 146.

The protein belongs to the universal ribosomal protein uL11 family. In terms of assembly, component of the large ribosomal subunit (LSU). Mature yeast ribosomes consist of a small (40S) and a large (60S) subunit. The 40S small subunit contains 1 molecule of ribosomal RNA (18S rRNA) and 33 different proteins (encoded by 57 genes). The large 60S subunit contains 3 rRNA molecules (25S, 5.8S and 5S rRNA) and 46 different proteins (encoded by 81 genes). It appears that the main modified species for L12 contains 6 methyl groups, 2 on Pro-2, 3 on Lys-4 and 1 on Arg-67. Although not reproduced with a second method, methylation at Lys-11 cannot be ruled out.

It localises to the cytoplasm. Its function is as follows. Component of the ribosome, a large ribonucleoprotein complex responsible for the synthesis of proteins in the cell. The small ribosomal subunit (SSU) binds messenger RNAs (mRNAs) and translates the encoded message by selecting cognate aminoacyl-transfer RNA (tRNA) molecules. The large subunit (LSU) contains the ribosomal catalytic site termed the peptidyl transferase center (PTC), which catalyzes the formation of peptide bonds, thereby polymerizing the amino acids delivered by tRNAs into a polypeptide chain. The nascent polypeptides leave the ribosome through a tunnel in the LSU and interact with protein factors that function in enzymatic processing, targeting, and the membrane insertion of nascent chains at the exit of the ribosomal tunnel. This chain is Large ribosomal subunit protein uL11A, found in Saccharomyces cerevisiae (strain ATCC 204508 / S288c) (Baker's yeast).